A 469-amino-acid chain; its full sequence is Siroheme synthase (469 aa).

Positions 1-211 are precorrin-2 dehydrogenase /sirohydrochlorin ferrochelatase; that stretch reads MSTQLQTWDF…GRTDKARAML (211 aa). Residues 29–30 and 50–51 each bind NAD(+); these read EQ and DP. S136 bears the Phosphoserine mark. Residues 227–469 form a uroporphyrinogen-III C-methyltransferase region; that stretch reads GEVYLVGAGP…TLRDRLRWMD (243 aa). P236 serves as a coordination point for S-adenosyl-L-methionine. D259 functions as the Proton acceptor in the catalytic mechanism. K281 (proton donor) is an active-site residue. S-adenosyl-L-methionine contacts are provided by residues 312–314, I317, 342–343, M394, and G423; these read GGD and TA.

In the N-terminal section; belongs to the precorrin-2 dehydrogenase / sirohydrochlorin ferrochelatase family. This sequence in the C-terminal section; belongs to the precorrin methyltransferase family.

It catalyses the reaction uroporphyrinogen III + 2 S-adenosyl-L-methionine = precorrin-2 + 2 S-adenosyl-L-homocysteine + H(+). It carries out the reaction precorrin-2 + NAD(+) = sirohydrochlorin + NADH + 2 H(+). The enzyme catalyses siroheme + 2 H(+) = sirohydrochlorin + Fe(2+). The protein operates within cofactor biosynthesis; adenosylcobalamin biosynthesis; precorrin-2 from uroporphyrinogen III: step 1/1. It participates in cofactor biosynthesis; adenosylcobalamin biosynthesis; sirohydrochlorin from precorrin-2: step 1/1. It functions in the pathway porphyrin-containing compound metabolism; siroheme biosynthesis; precorrin-2 from uroporphyrinogen III: step 1/1. Its pathway is porphyrin-containing compound metabolism; siroheme biosynthesis; siroheme from sirohydrochlorin: step 1/1. The protein operates within porphyrin-containing compound metabolism; siroheme biosynthesis; sirohydrochlorin from precorrin-2: step 1/1. Its function is as follows. Multifunctional enzyme that catalyzes the SAM-dependent methylations of uroporphyrinogen III at position C-2 and C-7 to form precorrin-2 via precorrin-1. Then it catalyzes the NAD-dependent ring dehydrogenation of precorrin-2 to yield sirohydrochlorin. Finally, it catalyzes the ferrochelation of sirohydrochlorin to yield siroheme. This chain is Siroheme synthase, found in Hahella chejuensis (strain KCTC 2396).